Here is a 662-residue protein sequence, read N- to C-terminus: DNA ligase (662 aa).

Residues 34–38 (DYDYD), 83–84 (SI), and E113 contribute to the NAD(+) site. K115 serves as the catalytic N6-AMP-lysine intermediate. NAD(+) is bound by residues R136, E172, K286, and K310. 4 residues coordinate Zn(2+): C404, C407, C422, and C427. Positions 583–662 (RASASCQGKT…SDLLKILYPN (80 aa)) constitute a BRCT domain.

Belongs to the NAD-dependent DNA ligase family. LigA subfamily. The cofactor is Mg(2+). Mn(2+) serves as cofactor.

It carries out the reaction NAD(+) + (deoxyribonucleotide)n-3'-hydroxyl + 5'-phospho-(deoxyribonucleotide)m = (deoxyribonucleotide)n+m + AMP + beta-nicotinamide D-nucleotide.. Its function is as follows. DNA ligase that catalyzes the formation of phosphodiester linkages between 5'-phosphoryl and 3'-hydroxyl groups in double-stranded DNA using NAD as a coenzyme and as the energy source for the reaction. It is essential for DNA replication and repair of damaged DNA. This chain is DNA ligase, found in Chlamydia felis (strain Fe/C-56) (Chlamydophila felis).